The chain runs to 311 residues: HPr kinase/phosphorylase (311 aa).

Residues His136 and Lys157 contribute to the active site. Residue 151–158 coordinates ATP; the sequence is GDSGIGKS. Residue Ser158 participates in Mg(2+) binding. The active-site Proton acceptor; for phosphorylation activity. Proton donor; for dephosphorylation activity is Asp175. Residues 199–208 are important for the catalytic mechanism of both phosphorylation and dephosphorylation; sequence LEIRGLGIIN. Glu200 contributes to the Mg(2+) binding site. Residue Arg241 is part of the active site. The segment at 262–267 is important for the catalytic mechanism of dephosphorylation; the sequence is PVRPGR.

The protein belongs to the HPrK/P family. As to quaternary structure, homohexamer. Mg(2+) serves as cofactor.

It catalyses the reaction [HPr protein]-L-serine + ATP = [HPr protein]-O-phospho-L-serine + ADP + H(+). It carries out the reaction [HPr protein]-O-phospho-L-serine + phosphate + H(+) = [HPr protein]-L-serine + diphosphate. Catalyzes the ATP- as well as the pyrophosphate-dependent phosphorylation of a specific serine residue in HPr, a phosphocarrier protein of the phosphoenolpyruvate-dependent sugar phosphotransferase system (PTS). HprK/P also catalyzes the pyrophosphate-producing, inorganic phosphate-dependent dephosphorylation (phosphorolysis) of seryl-phosphorylated HPr (P-Ser-HPr). The two antagonistic activities of HprK/P are regulated by several intracellular metabolites, which change their concentration in response to the absence or presence of rapidly metabolisable carbon sources (glucose, fructose, etc.) in the growth medium. Therefore, by controlling the phosphorylation state of HPr, HPrK/P is a sensor enzyme that plays a major role in the regulation of carbon metabolism and sugar transport: it mediates carbon catabolite repression (CCR), and regulates PTS-catalyzed carbohydrate uptake and inducer exclusion. The protein is HPr kinase/phosphorylase of Staphylococcus haemolyticus (strain JCSC1435).